We begin with the raw amino-acid sequence, 102 residues long: Parathymosin (102 aa).

A disordered region spans residues 1 to 102; sequence MSEKSVEAAA…RQKTENGASA (102 aa). Ser2 bears the N-acetylserine mark. Residue Ser2 is modified to Phosphoserine. N6-acetyllysine is present on Lys4. A phosphoserine mark is found at Ser5 and Ser13. Residues 13-37 are compositionally biased toward basic and acidic residues; sequence SAKDLKEKKDKVEEKAGRKERKKEV. Lys15 carries the post-translational modification N6-acetyllysine. The segment covering 38–75 has biased composition (acidic residues); it reads VEEEENGAEEEEEETAEDGEDDDEGDEEDEEEEEEEDE. Thr52 is subject to Phosphothreonine. An N6-acetyllysine modification is found at Lys92.

It belongs to the pro/parathymosin family.

Functionally, parathymosin may mediate immune function by blocking the effect of prothymosin alpha which confers resistance to certain opportunistic infections. The protein is Parathymosin (Ptms) of Rattus norvegicus (Rat).